We begin with the raw amino-acid sequence, 419 residues long: L-rhamnose isomerase (419 aa).

Mn(2+) is bound by residues His-262, Asp-294, and Asp-296.

Belongs to the rhamnose isomerase family. As to quaternary structure, homotetramer. It depends on Mn(2+) as a cofactor.

The protein localises to the cytoplasm. It catalyses the reaction L-rhamnopyranose = L-rhamnulose. It functions in the pathway carbohydrate degradation; L-rhamnose degradation; glycerone phosphate from L-rhamnose: step 1/3. In terms of biological role, catalyzes the interconversion of L-rhamnose and L-rhamnulose. The polypeptide is L-rhamnose isomerase (Escherichia coli O9:H4 (strain HS)).